We begin with the raw amino-acid sequence, 127 residues long: Large ribosomal subunit protein uL18 (127 aa).

Belongs to the universal ribosomal protein uL18 family. As to quaternary structure, part of the 50S ribosomal subunit; part of the 5S rRNA/L5/L18/L25 subcomplex. Contacts the 5S and 23S rRNAs.

In terms of biological role, this is one of the proteins that bind and probably mediate the attachment of the 5S RNA into the large ribosomal subunit, where it forms part of the central protuberance. The polypeptide is Large ribosomal subunit protein uL18 (Streptomyces coelicolor (strain ATCC BAA-471 / A3(2) / M145)).